Consider the following 182-residue polypeptide: ATP synthase subunit delta (182 aa).

Belongs to the ATPase delta chain family. In terms of assembly, F-type ATPases have 2 components, F(1) - the catalytic core - and F(0) - the membrane proton channel. F(1) has five subunits: alpha(3), beta(3), gamma(1), delta(1), epsilon(1). F(0) has three main subunits: a(1), b(2) and c(10-14). The alpha and beta chains form an alternating ring which encloses part of the gamma chain. F(1) is attached to F(0) by a central stalk formed by the gamma and epsilon chains, while a peripheral stalk is formed by the delta and b chains.

It is found in the cell inner membrane. Functionally, f(1)F(0) ATP synthase produces ATP from ADP in the presence of a proton or sodium gradient. F-type ATPases consist of two structural domains, F(1) containing the extramembraneous catalytic core and F(0) containing the membrane proton channel, linked together by a central stalk and a peripheral stalk. During catalysis, ATP synthesis in the catalytic domain of F(1) is coupled via a rotary mechanism of the central stalk subunits to proton translocation. Its function is as follows. This protein is part of the stalk that links CF(0) to CF(1). It either transmits conformational changes from CF(0) to CF(1) or is implicated in proton conduction. This is ATP synthase subunit delta from Myxococcus xanthus (strain DK1622).